The sequence spans 188 residues: Killer cell lectin-like receptor subfamily G member 1 (188 aa).

Over Met1–Pro33 the chain is Cytoplasmic. Residues Ser5 to Leu10 carry the ITIM motif motif. A helical; Signal-anchor for type II membrane protein transmembrane segment spans residues His34–Tyr56. Residues Gln57 to Tyr188 lie on the Extracellular side of the membrane. An intrachain disulfide couples Cys75 to Cys86. Asn82 and Asn97 each carry an N-linked (GlcNAc...) asparagine glycan. Positions Asn82 to Lys184 constitute a C-type lectin domain. Intrachain disulfides connect Cys103–Cys183 and Cys162–Cys175.

Forms a monomer and homodimer; disulfide-linked. Interacts (via ITIM motif) with PTPN11 and INPP5D. Post-translationally, phosphorylated in response to monoclonal antibody G63 binding and antigenic stimulation. As to expression, expressed specifically on natural killer (NK) cells and activated CD8 T-cells. Not detected in spleen, thymus, lymph node, testis, brain or kidney. Not detected on mast cell lines, bone marrow-derived mast cells, or peritoneal mast cells.

The protein localises to the cell membrane. Plays an inhibitory role on natural killer (NK) cells and T-cell functions upon binding to their non-MHC ligands. May mediate missing self recognition by binding to a highly conserved site on classical cadherins, enabling it to monitor expression of E-cadherin/CDH1, N-cadherin/CDH2 and R-cadherin/CDH4 on target cells. This is Killer cell lectin-like receptor subfamily G member 1 (Klrg1) from Mus musculus (Mouse).